The chain runs to 957 residues: Kinesin heavy chain isoform 5C (957 aa).

In terms of domain architecture, Kinesin motor spans 8–327 (SIKVMCRFRP…LMFGQRAKTI (320 aa)). ATP contacts are provided by Gln87, Ser89, Ser90, Gly91, Lys92, Thr93, His94, and Lys99. Residues 174–315 (VSSPEEVMDV…PSVFNEAETK (142 aa)) are microtubule-binding. Positions 406–923 (VAGISTEEKE…ARRAHSAQIA (518 aa)) form a coiled coil. Residues 859–956 (RCELPKLEKR…GSSSNSTHYQ (98 aa)) are globular. The tract at residues 911 to 957 (KNMARRAHSAQIAKPIRPGHYPASSPTAVHAIRGGGGSSSNSTHYQK) is disordered.

The protein belongs to the TRAFAC class myosin-kinesin ATPase superfamily. Kinesin family. Kinesin subfamily. Oligomer composed of two heavy chains and two light chains. Interacts with GRIP1 and KLC3. Interacts with TRAK1. Interacts with ZFYVE27. As to expression, highest expression in brain, prostate and testis, and moderate expression in kidney, small intestine and ovary.

It is found in the cytoplasm. The protein resides in the cytoskeleton. It localises to the cell projection. Its subcellular location is the dendrite. The catalysed reaction is ATP + H2O = ADP + phosphate + H(+). Microtubule-associated force-producing protein that may play a role in organelle transport. Has ATPase activity. Involved in synaptic transmission. Mediates dendritic trafficking of mRNAs. Required for anterograde axonal transportation of MAPK8IP3/JIP3 which is essential for MAPK8IP3/JIP3 function in axon elongation. In Homo sapiens (Human), this protein is Kinesin heavy chain isoform 5C (KIF5C).